A 514-amino-acid polypeptide reads, in one-letter code: Glutamate--cysteine ligase, chloroplastic (514 aa).

Residues 1–55 (MALLSQAGGAYTVPSGHVSSRTGTKTVSGCVNVLRMKETYVSSYSRTLSTKSMLK) constitute a chloroplast transit peptide. 2 disulfides stabilise this stretch: C178-C398 and C341-C356.

It belongs to the carboxylate-amine ligase family. Glutamate--cysteine ligase type 2 subfamily. Homodimer or monomer when oxidized or reduced, respectively. In terms of processing, the Cys-178-Cys-398 disulfide bridge is known to modulate the enzyme activity according to the redox status. The oxidized form constitutes the active enzyme.

It localises to the plastid. It is found in the chloroplast. The catalysed reaction is L-cysteine + L-glutamate + ATP = gamma-L-glutamyl-L-cysteine + ADP + phosphate + H(+). The protein operates within sulfur metabolism; glutathione biosynthesis; glutathione from L-cysteine and L-glutamate: step 1/2. In terms of biological role, participates in the detoxification process. The protein is Glutamate--cysteine ligase, chloroplastic (GSH1) of Brassica juncea (Indian mustard).